We begin with the raw amino-acid sequence, 173 residues long: MTRAFYIGRFQPYHFGHHAVIARIAEEVDELVIGIGSAQKSHEAIDPFTAGERVLMVYNALEHLSIRHYVVPIEDVRYNSIWVHHVVSRTPRFDVVYSNNPLVIQLFREAGFCVKESPLYVRERYSGTEIRRRMIEGEKWEHLVPKPVAEVIKSFDGVSRLKNVSTSDSNFSL.

Belongs to the archaeal NMN adenylyltransferase family.

It localises to the cytoplasm. The catalysed reaction is beta-nicotinamide D-ribonucleotide + ATP + H(+) = diphosphate + NAD(+). The protein operates within cofactor biosynthesis; NAD(+) biosynthesis; NAD(+) from nicotinamide D-ribonucleotide: step 1/1. The chain is Nicotinamide-nucleotide adenylyltransferase from Methanosarcina mazei (strain ATCC BAA-159 / DSM 3647 / Goe1 / Go1 / JCM 11833 / OCM 88) (Methanosarcina frisia).